A 264-amino-acid chain; its full sequence is Myozenin-2 (264 aa).

An Omega-N-methylarginine modification is found at Arg-53. The interval 98–134 (ESGSQQAPFTPPNTPDPRSPPNPENIAPGYSGPLKEI) is disordered. Phosphoserine is present on Ser-101. Positions 106–120 (FTPPNTPDPRSPPNP) are enriched in pro residues. Phosphothreonine is present on residues Thr-107 and Thr-111. Ser-116 is subject to Phosphoserine.

Belongs to the myozenin family. In terms of assembly, interacts via its C-terminus with spectrin repeats 3 and 4 of ACTN2. Interacts with ACTN1, LDB3, MYOT and PPP3CA.

It is found in the cytoplasm. Its subcellular location is the myofibril. It localises to the sarcomere. The protein localises to the z line. Myozenins may serve as intracellular binding proteins involved in linking Z line proteins such as alpha-actinin, gamma-filamin, TCAP/telethonin, LDB3/ZASP and localizing calcineurin signaling to the sarcomere. Plays an important role in the modulation of calcineurin signaling. May play a role in myofibrillogenesis. This chain is Myozenin-2 (MYOZ2), found in Bos taurus (Bovine).